The following is a 419-amino-acid chain: UDP-N-acetylglucosamine 1-carboxyvinyltransferase 2 (419 aa).

Position 22 to 23 (22 to 23) interacts with phosphoenolpyruvate; it reads KN. UDP-N-acetyl-alpha-D-glucosamine is bound at residue arginine 92. Catalysis depends on cysteine 116, which acts as the Proton donor. Cysteine 116 bears the 2-(S-cysteinyl)pyruvic acid O-phosphothioketal mark. Residues 121–125, aspartate 306, and isoleucine 328 contribute to the UDP-N-acetyl-alpha-D-glucosamine site; that span reads RPIDL.

It belongs to the EPSP synthase family. MurA subfamily.

It is found in the cytoplasm. The enzyme catalyses phosphoenolpyruvate + UDP-N-acetyl-alpha-D-glucosamine = UDP-N-acetyl-3-O-(1-carboxyvinyl)-alpha-D-glucosamine + phosphate. Its pathway is cell wall biogenesis; peptidoglycan biosynthesis. Its function is as follows. Cell wall formation. Adds enolpyruvyl to UDP-N-acetylglucosamine. The chain is UDP-N-acetylglucosamine 1-carboxyvinyltransferase 2 from Streptococcus mutans serotype c (strain ATCC 700610 / UA159).